We begin with the raw amino-acid sequence, 464 residues long: MAKLARVVGLVQEEQPSDMTNHPRYSPPPQQPGTPGYAQGQQQTYSQQFDWRYPPSPPPQPTQYRQPYEALGGTRPGLIPGVIPTMTPPPGMVRQRPRAGMLAIGAVTIAVVSAGIGGAAASLVGFNRAPAGPSGGPVAASAAPSIPAANMPPGSVEQVAAKVVPSVVMLETDLGRQSEEGSGIILSAEGLILTNNHVIAAAAKPPLGSPPPKTTVTFSDGRTAPFTVVGADPTSDIAVVRVQGVSGLTPISLGSSSDLRVGQPVLAIGSPLGLEGTVTTGIVSALNRPVSTTGEAGNQNTVLDAIQTDAAINPGNSGGALVNMNAQLVGVNSAIATLGADSADAQSGSIGLGFAIPVDQAKRIADELISTGKASHASLGVQVTNDKDTLGAKIVEVVAGGAAANAGVPKGVVVTKVDDRPINSADALVAAVRSKAPGATVALTFQDPSGGSRTVQVTLGKAEQ.

The disordered stretch occupies residues 1–71 (MAKLARVVGL…TQYRQPYEAL (71 aa)). At 1-100 (MAKLARVVGL…GMVRQRPRAG (100 aa)) the chain is on the cytoplasmic side. Low complexity predominate over residues 39-48 (QGQQQTYSQQ). A helical membrane pass occupies residues 101–121 (MLAIGAVTIAVVSAGIGGAAA). The Periplasmic portion of the chain corresponds to 122–464 (SLVGFNRAPA…VQVTLGKAEQ (343 aa)). Catalysis depends on charge relay system residues H197, D236, and S317. Residues 368-449 (LISTGKASHA…TVALTFQDPS (82 aa)) form the PDZ domain.

This sequence belongs to the peptidase S1C family. In terms of assembly, homotrimer. Interacts with numerous proteins, including the 35 kDa antigen PspA.

The protein localises to the cell inner membrane. The protein resides in the secreted. It is found in the cell wall. The enzyme catalyses Acts on substrates that are at least partially unfolded. The cleavage site P1 residue is normally between a pair of hydrophobic residues, such as Val-|-Val.. With respect to regulation, probably regulates its own activity by autocleavage, which removes the PDZ domain. Inhibited by the serine protease inhibitor diisopropylfluorophosphate (DFP). Inhibited by fluoroquinolone such as ciprofloxacin, moxifloxacin and ofloxacin and their analogs. Required for virulence. Acts both as a protease, which degrades and/or refolds damaged substrate targets, and as a chaperone. Plays an important role in the stress response network mediated through the two-component regulatory system MprAB and SigE signaling networks. May utilize its PDZ domain to recognize and process misfolded proteins at the cell membrane, leading to activation of the MprAB and SigE signaling pathways and subsequent establishment of a positive feedback loop that facilitates bacterial adaptation. Interacts with and potentially cleaves several proteins, including the 35 kDa antigen PspA. Proteolytic cleavage of PspA may help to maintain cell envelope homeostasis in Mycobacterium and regulate specific stress response pathways during periods of extracytoplasmic stress. In vitro, exhibits proteolytic activity against the artificial substrate beta-casein. The sequence is that of Serine protease PepD from Mycobacterium tuberculosis (strain ATCC 25618 / H37Rv).